A 137-amino-acid polypeptide reads, in one-letter code: Large ribosomal subunit protein eL28 (137 aa).

The residue at position 2 (serine 2) is an N-acetylserine. Glycyl lysine isopeptide (Lys-Gly) (interchain with G-Cter in SUMO2) cross-links involve residues lysine 58 and lysine 65. The residue at position 115 (serine 115) is a Phosphoserine.

This sequence belongs to the eukaryotic ribosomal protein eL28 family. Component of the large ribosomal subunit.

The protein localises to the cytoplasm. Functionally, component of the large ribosomal subunit. The ribosome is a large ribonucleoprotein complex responsible for the synthesis of proteins in the cell. The protein is Large ribosomal subunit protein eL28 (Rpl28) of Mus musculus (Mouse).